Reading from the N-terminus, the 361-residue chain is Septin-2 (361 aa).

At Y17 the chain carries Phosphotyrosine. The Septin-type G domain maps to 34-306; sequence KGFEFTLMVV…ENFRSERLKR (273 aa). The interval 44–51 is G1 motif; sequence GESGLGKS. Residues 44 to 51, T78, G104, and 183 to 191 each bind GTP; these read GESGLGKS and KADTLTLKE. Residues 101-104 form a G3 motif region; the sequence is DTPG. The G4 motif stretch occupies residues 182–185; it reads AKAD. K190 carries the N6-acetyllysine modification. Y211 is modified (phosphotyrosine). A Phosphoserine modification is found at S218. GTP-binding residues include G241 and R256. An important for dimerization region spans residues 260–270; that stretch reads WGVVEVENPEH.

It belongs to the TRAFAC class TrmE-Era-EngA-EngB-Septin-like GTPase superfamily. Septin GTPase family. In terms of assembly, septins polymerize into heterooligomeric protein complexes that form filaments, and associate with cellular membranes, actin filaments and microtubules. GTPase activity is required for filament formation. Septin filaments are assembled from asymmetrical heterotrimers, composed of SEPTIN2, SEPTIN6 and SEPTIN7 that associate head-to-head to form a hexameric unit. Interaction between SEPTIN2 and SEPTIN7 seems indirect. Also interacts with SEPTIN9 and SEPTIN5. Interaction with SEPTIN4 not detected. Component of a septin core octameric complex consisting of SEPTIN12, SEPTIN7, SEPTIN6 and SEPTIN2 or SEPTIN4 in the order 12-7-6-2-2-6-7-12 or 12-7-6-4-4-6-7-12 and located in the sperm annulus. Interacts with MAP4. Interacts with DZIP1L.

Its subcellular location is the cytoplasm. The protein resides in the cytoskeleton. It is found in the spindle. It localises to the cleavage furrow. The protein localises to the midbody. Its subcellular location is the cell cortex. The protein resides in the cell projection. It is found in the cilium membrane. It localises to the cilium. The protein localises to the flagellum. Filament-forming cytoskeletal GTPase. Forms a filamentous structure with SEPTIN12, SEPTIN6, SEPTIN2 and probably SEPTIN4 at the sperm annulus which is required for the structural integrity and motility of the sperm tail during postmeiotic differentiation. Required for normal organization of the actin cytoskeleton. Plays a role in the biogenesis of polarized columnar-shaped epithelium by maintaining polyglutamylated microtubules, thus facilitating efficient vesicle transport, and by impeding MAP4 binding to tubulin. Required for the progression through mitosis. Forms a scaffold at the midplane of the mitotic splindle required to maintain CENPE localization at kinetochores and consequently chromosome congression. During anaphase, may be required for chromosome segregation and spindle elongation. Plays a role in ciliogenesis and collective cell movements. In cilia, required for the integrity of the diffusion barrier at the base of the primary cilium that prevents diffusion of transmembrane proteins between the cilia and plasma membranes: probably acts by regulating the assembly of the tectonic-like complex (also named B9 complex) by localizing TMEM231 protein. This is Septin-2 from Rattus norvegicus (Rat).